Reading from the N-terminus, the 223-residue chain is Probable transaldolase (223 aa).

Catalysis depends on K83, which acts as the Schiff-base intermediate with substrate.

The protein belongs to the transaldolase family. Type 3B subfamily.

The protein localises to the cytoplasm. It carries out the reaction D-sedoheptulose 7-phosphate + D-glyceraldehyde 3-phosphate = D-erythrose 4-phosphate + beta-D-fructose 6-phosphate. It functions in the pathway carbohydrate degradation; pentose phosphate pathway; D-glyceraldehyde 3-phosphate and beta-D-fructose 6-phosphate from D-ribose 5-phosphate and D-xylulose 5-phosphate (non-oxidative stage): step 2/3. In terms of biological role, transaldolase is important for the balance of metabolites in the pentose-phosphate pathway. The chain is Probable transaldolase from Myxococcus xanthus (strain DK1622).